We begin with the raw amino-acid sequence, 269 residues long: 3-methyl-2-oxobutanoate hydroxymethyltransferase (269 aa).

Mg(2+) contacts are provided by aspartate 50 and aspartate 89. 3-methyl-2-oxobutanoate is bound by residues 50–51 (DS), aspartate 89, and lysine 119. Glutamate 121 contributes to the Mg(2+) binding site. Residue glutamate 187 is the Proton acceptor of the active site.

It belongs to the PanB family. Homodecamer; pentamer of dimers. The cofactor is Mg(2+).

The protein localises to the cytoplasm. The catalysed reaction is 3-methyl-2-oxobutanoate + (6R)-5,10-methylene-5,6,7,8-tetrahydrofolate + H2O = 2-dehydropantoate + (6S)-5,6,7,8-tetrahydrofolate. It functions in the pathway cofactor biosynthesis; (R)-pantothenate biosynthesis; (R)-pantoate from 3-methyl-2-oxobutanoate: step 1/2. Catalyzes the reversible reaction in which hydroxymethyl group from 5,10-methylenetetrahydrofolate is transferred onto alpha-ketoisovalerate to form ketopantoate. The chain is 3-methyl-2-oxobutanoate hydroxymethyltransferase from Corynebacterium efficiens (strain DSM 44549 / YS-314 / AJ 12310 / JCM 11189 / NBRC 100395).